Reading from the N-terminus, the 276-residue chain is Adenylate kinase (276 aa).

Position 52–57 (52–57 (GAGKGT)) interacts with ATP. The segment at 72–101 (ATGDMLRAQVAAKTPLGREAKKIMDAGGLV) is NMP. AMP is bound by residues T73, R78, 99–101 (GLV), 128–131 (GFPR), and Q135. Positions 169 to 206 (GRLVHPASGRSYHKIFNPPKAPMTDDVTGEPLIQRSDD) are LID. Residues R170 and 179 to 180 (SY) contribute to the ATP site. The AMP site is built by R203 and R214. Residue Q242 participates in ATP binding.

The protein belongs to the adenylate kinase family. AK2 subfamily. As to quaternary structure, monomer.

Its subcellular location is the cytoplasm. The protein localises to the cytosol. It localises to the mitochondrion intermembrane space. It catalyses the reaction AMP + ATP = 2 ADP. Catalyzes the reversible transfer of the terminal phosphate group between ATP and AMP. Plays an important role in cellular energy homeostasis and in adenine nucleotide metabolism. Adenylate kinase activity is critical for regulation of the phosphate utilization and the AMP de novo biosynthesis pathways. This chain is Adenylate kinase (adk1), found in Pyrenophora tritici-repentis (strain Pt-1C-BFP) (Wheat tan spot fungus).